We begin with the raw amino-acid sequence, 328 residues long: Alcohol-sensitive RING finger protein 1 (328 aa).

The RING-type 1; atypical zinc-finger motif lies at 18–61; that stretch reads CSICWESMPSGVGRLMPCGHEYHLACIRKWFHLHSGNRSCPVCR. An RING-type 2; atypical zinc finger spans residues 129-177; the sequence is CGICGEMNGDIDTCCNRCHHMYHHSCLGQLLVEVNAEREQGWSHCIFCY.

The protein resides in the cytoplasm. It is found in the nucleus. Its function is as follows. Required for tolerance to alcohol. This Eremothecium gossypii (strain ATCC 10895 / CBS 109.51 / FGSC 9923 / NRRL Y-1056) (Yeast) protein is Alcohol-sensitive RING finger protein 1 (ASR1).